We begin with the raw amino-acid sequence, 209 residues long: MGKLYVFDHPLIQHKITYIRDKNTGTKEFRELVDEVASLMAFEITRDLPLEEIEIETPVSKAKTKVIAGKKLGLIPILRAGLGMVDGILKLIPAAKVGHIGLYRDPKTLQPVEYYVKLPTDVEERDFIVLDPMLATGGSAAEAINSLKKRGAKHIKLMCIVAAPEGVKVVQEEHPDVDIYVAALDEKLNDHGYVVPGLGDAGDRLFGTK.

Residues Arg79, Arg104, and 131 to 139 (DPMLATGGS) contribute to the 5-phospho-alpha-D-ribose 1-diphosphate site. Residues Val194 and 199–201 (GDA) contribute to the uracil site. 5-phospho-alpha-D-ribose 1-diphosphate is bound at residue Asp200.

This sequence belongs to the UPRTase family. Requires Mg(2+) as cofactor.

It catalyses the reaction UMP + diphosphate = 5-phospho-alpha-D-ribose 1-diphosphate + uracil. It functions in the pathway pyrimidine metabolism; UMP biosynthesis via salvage pathway; UMP from uracil: step 1/1. Its activity is regulated as follows. Allosterically activated by GTP. Its function is as follows. Catalyzes the conversion of uracil and 5-phospho-alpha-D-ribose 1-diphosphate (PRPP) to UMP and diphosphate. The sequence is that of Uracil phosphoribosyltransferase from Bacillus cytotoxicus (strain DSM 22905 / CIP 110041 / 391-98 / NVH 391-98).